A 242-amino-acid chain; its full sequence is uncharacterized protein (242 aa).

2 disordered regions span residues 43–70 (SRRS…TSKD) and 112–162 (RMSR…VTPR). Positions 58–70 (QSVSGRKNSTSKD) are enriched in polar residues. Composition is skewed to low complexity over residues 122–139 (ERAA…AGHA) and 147–162 (ADGA…VTPR).

This is an uncharacterized protein from Homo sapiens (Human).